A 303-amino-acid polypeptide reads, in one-letter code: N-acetyl-D-glucosamine kinase (303 aa).

ATP contacts are provided by residues 4–11 (GFDVGGTK) and 133–140 (GFGGGLIY). Histidine 157, cysteine 177, cysteine 179, and cysteine 184 together coordinate Zn(2+).

The protein belongs to the ROK (NagC/XylR) family. NagK subfamily.

The catalysed reaction is N-acetyl-D-glucosamine + ATP = N-acetyl-D-glucosamine 6-phosphate + ADP + H(+). It participates in cell wall biogenesis; peptidoglycan recycling. Catalyzes the phosphorylation of N-acetyl-D-glucosamine (GlcNAc) derived from cell-wall degradation, yielding GlcNAc-6-P. The protein is N-acetyl-D-glucosamine kinase of Vibrio vulnificus (strain CMCP6).